The primary structure comprises 187 residues: Ribosome-recycling factor (187 aa).

Belongs to the RRF family.

The protein resides in the cytoplasm. Its function is as follows. Responsible for the release of ribosomes from messenger RNA at the termination of protein biosynthesis. May increase the efficiency of translation by recycling ribosomes from one round of translation to another. The polypeptide is Ribosome-recycling factor (Ruegeria pomeroyi (strain ATCC 700808 / DSM 15171 / DSS-3) (Silicibacter pomeroyi)).